A 247-amino-acid chain; its full sequence is Cell division protein ZapD (247 aa).

The protein belongs to the ZapD family. Interacts with FtsZ.

It is found in the cytoplasm. Its function is as follows. Cell division factor that enhances FtsZ-ring assembly. Directly interacts with FtsZ and promotes bundling of FtsZ protofilaments, with a reduction in FtsZ GTPase activity. The chain is Cell division protein ZapD from Shigella boydii serotype 18 (strain CDC 3083-94 / BS512).